The following is a 91-amino-acid chain: Acylphosphatase (91 aa).

In terms of domain architecture, Acylphosphatase-like spans 4–91 (RAMVTVKGMV…GEFDDFHIAY (88 aa)). Active-site residues include Arg-19 and Asn-37.

The protein belongs to the acylphosphatase family.

It catalyses the reaction an acyl phosphate + H2O = a carboxylate + phosphate + H(+). This Geotalea uraniireducens (strain Rf4) (Geobacter uraniireducens) protein is Acylphosphatase (acyP).